The sequence spans 130 residues: Small ribosomal subunit protein uS11c (130 aa).

This sequence belongs to the universal ribosomal protein uS11 family. In terms of assembly, part of the 30S ribosomal subunit.

It localises to the plastid. It is found in the chloroplast. In Phaeodactylum tricornutum (strain CCAP 1055/1), this protein is Small ribosomal subunit protein uS11c.